Consider the following 326-residue polypeptide: Protein BCCIP homolog (326 aa).

The segment at 37–81 (SHPEDCQCSDEDISFDEKQKIPNLPRKGKEEQVSDSSDEEDSQED) is disordered. Serine 45 carries the post-translational modification Phosphoserine. The segment covering 72–81 (SSDEEDSQED) has biased composition (acidic residues).

It belongs to the BCP1 family.

This is Protein BCCIP homolog from Arabidopsis thaliana (Mouse-ear cress).